The sequence spans 419 residues: uncharacterized protein (419 aa).

Helical transmembrane passes span 15 to 35 (RVLM…MPYL), 36 to 56 (ADYL…VMGV), 77 to 99 (YKPL…VVAQ), 104 to 126 (VLIA…RGYL), 140 to 160 (MFNV…LVLL), 166 to 186 (ITVL…LVAL), 213 to 233 (FLTL…IYLA), 246 to 266 (QYLL…GGQL), 282 to 302 (LVVG…IPNG), 309 to 329 (VAVM…AALF), 351 to 371 (FYST…GSLM), and 377 to 397 (LNTD…AVAG).

This sequence belongs to the major facilitator superfamily.

Its subcellular location is the cell membrane. This is an uncharacterized protein from Mycobacterium tuberculosis (strain CDC 1551 / Oshkosh).